Here is a 710-residue protein sequence, read N- to C-terminus: Polyribonucleotide nucleotidyltransferase (710 aa).

Mg(2+) is bound by residues Asp489 and Asp495. Residues 556–615 (PKIDTIKIDVDKIKVVIGKGGETIDKIIAETGVKIDIDDEGNVSIYSSDQAAIDRTKEII) form the KH domain. Positions 625–693 (GEVYHAKVVR…EKGRVDASMK (69 aa)) constitute an S1 motif domain. The interval 691 to 710 (SMKALIPRPPKPEKKEEKHD) is disordered. Residues 700 to 710 (PKPEKKEEKHD) are compositionally biased toward basic and acidic residues.

Belongs to the polyribonucleotide nucleotidyltransferase family. Mg(2+) is required as a cofactor.

It is found in the cytoplasm. It carries out the reaction RNA(n+1) + phosphate = RNA(n) + a ribonucleoside 5'-diphosphate. In terms of biological role, involved in mRNA degradation. Catalyzes the phosphorolysis of single-stranded polyribonucleotides processively in the 3'- to 5'-direction. In Streptococcus pyogenes serotype M1, this protein is Polyribonucleotide nucleotidyltransferase.